The chain runs to 199 residues: Recombination protein RecR (199 aa).

The C4-type zinc-finger motif lies at 56 to 71 (CAICGNVAEHEQCRIC). Residues 79 to 174 (TVLCVVEEPK…RVTRLASGLP (96 aa)) form the Toprim domain.

It belongs to the RecR family.

Functionally, may play a role in DNA repair. It seems to be involved in an RecBC-independent recombinational process of DNA repair. It may act with RecF and RecO. This Acidothermus cellulolyticus (strain ATCC 43068 / DSM 8971 / 11B) protein is Recombination protein RecR.